The following is a 154-amino-acid chain: Putative pre-16S rRNA nuclease (154 aa).

This sequence belongs to the YqgF nuclease family.

The protein resides in the cytoplasm. Its function is as follows. Could be a nuclease involved in processing of the 5'-end of pre-16S rRNA. This is Putative pre-16S rRNA nuclease from Rickettsia bellii (strain OSU 85-389).